The following is a 369-amino-acid chain: 4-hydroxy-3-methylbut-2-en-1-yl diphosphate synthase (flavodoxin) (369 aa).

[4Fe-4S] cluster-binding residues include Cys270, Cys273, Cys305, and Glu312.

It belongs to the IspG family. Requires [4Fe-4S] cluster as cofactor.

It carries out the reaction (2E)-4-hydroxy-3-methylbut-2-enyl diphosphate + oxidized [flavodoxin] + H2O + 2 H(+) = 2-C-methyl-D-erythritol 2,4-cyclic diphosphate + reduced [flavodoxin]. It functions in the pathway isoprenoid biosynthesis; isopentenyl diphosphate biosynthesis via DXP pathway; isopentenyl diphosphate from 1-deoxy-D-xylulose 5-phosphate: step 5/6. Its function is as follows. Converts 2C-methyl-D-erythritol 2,4-cyclodiphosphate (ME-2,4cPP) into 1-hydroxy-2-methyl-2-(E)-butenyl 4-diphosphate. The chain is 4-hydroxy-3-methylbut-2-en-1-yl diphosphate synthase (flavodoxin) from Pseudomonas putida (strain GB-1).